The chain runs to 420 residues: Tyrosine--tRNA ligase (420 aa).

Tyr33 is a binding site for L-tyrosine. Positions 38 to 47 (PTGDSLHAGH) match the 'HIGH' region motif. The L-tyrosine site is built by Tyr167 and Gln171. The short motif at 227 to 231 (KFGKS) is the 'KMSKS' region element. Lys230 lines the ATP pocket. One can recognise an S4 RNA-binding domain in the interval 352–418 (PTIIDLLIGA…GKKNFAGVKY (67 aa)).

Belongs to the class-I aminoacyl-tRNA synthetase family. TyrS type 1 subfamily. Homodimer.

It is found in the cytoplasm. It catalyses the reaction tRNA(Tyr) + L-tyrosine + ATP = L-tyrosyl-tRNA(Tyr) + AMP + diphosphate + H(+). Its function is as follows. Catalyzes the attachment of tyrosine to tRNA(Tyr) in a two-step reaction: tyrosine is first activated by ATP to form Tyr-AMP and then transferred to the acceptor end of tRNA(Tyr). The protein is Tyrosine--tRNA ligase of Corynebacterium diphtheriae (strain ATCC 700971 / NCTC 13129 / Biotype gravis).